We begin with the raw amino-acid sequence, 426 residues long: 3',5'-cyclic-nucleotide phosphodiesterase (426 aa).

The interval Asp210–Gly229 is disordered.

The protein belongs to the cyclic nucleotide phosphodiesterase class-II family.

The enzyme catalyses a nucleoside 3',5'-cyclic phosphate + H2O = a nucleoside 5'-phosphate + H(+). This is 3',5'-cyclic-nucleotide phosphodiesterase (PDE1) from Candida albicans (Yeast).